We begin with the raw amino-acid sequence, 660 residues long: Acetyl-coenzyme A synthetase (660 aa).

Residues 197–200 (RGGK) and Thr317 each bind CoA. ATP-binding positions include 397 to 399 (GEP), 421 to 426 (DTWWQT), Asp512, and Arg528. A CoA-binding site is contributed by Ser536. Residue Arg539 coordinates ATP. Positions 550 and 555 each coordinate Mg(2+). The residue at position 625 (Lys625) is an N6-acetyllysine.

This sequence belongs to the ATP-dependent AMP-binding enzyme family. Mg(2+) serves as cofactor. In terms of processing, acetylated. Deacetylation by the SIR2-homolog deacetylase activates the enzyme.

It catalyses the reaction acetate + ATP + CoA = acetyl-CoA + AMP + diphosphate. Catalyzes the conversion of acetate into acetyl-CoA (AcCoA), an essential intermediate at the junction of anabolic and catabolic pathways. AcsA undergoes a two-step reaction. In the first half reaction, AcsA combines acetate with ATP to form acetyl-adenylate (AcAMP) intermediate. In the second half reaction, it can then transfer the acetyl group from AcAMP to the sulfhydryl group of CoA, forming the product AcCoA. The polypeptide is Acetyl-coenzyme A synthetase (Paraburkholderia phymatum (strain DSM 17167 / CIP 108236 / LMG 21445 / STM815) (Burkholderia phymatum)).